The chain runs to 217 residues: Small ribosomal subunit protein uS3c (217 aa).

The KH type-2 domain maps to 39–109; that stretch reads IRSCIEKQLH…QIRINLIEIT (71 aa).

This sequence belongs to the universal ribosomal protein uS3 family. As to quaternary structure, part of the 30S ribosomal subunit.

It localises to the plastid. The protein resides in the chloroplast. This Gracilaria tenuistipitata var. liui (Red alga) protein is Small ribosomal subunit protein uS3c (rps3).